A 705-amino-acid chain; its full sequence is ATP-dependent DNA helicase Q-like 2 (705 aa).

The stretch at 1 to 30 (MESEAIQEDLQNLDVELKDVQGQISALIEH) forms a coiled coil. Residues 98-273 (INAIMTGRDV…IEMLHIPKCV (176 aa)) enclose the Helicase ATP-binding domain. An ATP-binding site is contributed by 111–118 (MAAGGGKS). A DEAH box motif is present at residues 217 to 220 (DEAH). Positions 298–450 (VVDEIAEFIR…DIVRYCQSKT (153 aa)) constitute a Helicase C-terminal domain. One can recognise an HRDC domain in the interval 591 to 670 (SITFSGLELK…MRHEAVSEQL (80 aa)). Positions 668 to 705 (EQLVEDPTKEETCKSRLRKRAKTQKDVVLVESSGEEEA) are disordered.

It belongs to the helicase family. RecQ subfamily. As to quaternary structure, interacts with WEX. Mg(2+) is required as a cofactor. Mn(2+) serves as cofactor. In terms of tissue distribution, expressed in shoots and flowers. Expressed in young leaves, inflorescences, roots, shoot apical meristem, young siliques, and mature green siliques.

It localises to the nucleus. It carries out the reaction Couples ATP hydrolysis with the unwinding of duplex DNA by translocating in the 3'-5' direction.. It catalyses the reaction ATP + H2O = ADP + phosphate + H(+). Its function is as follows. 3'-5' DNA helicase that may play a role in the repair of DNA. Its DNA unwinding activity in vitro is dependent on magnesium, and ATP or dATP. Can use GTP/dGTP, CTP/dCTP or UTP/dUTP as nucleotide cofactors. Catalyzes Holliday junction branch migration and replication fork regression. Disrupts D-loop structures. Unwinds G-quadruplex DNA, found in telomeric DNA. In Arabidopsis thaliana (Mouse-ear cress), this protein is ATP-dependent DNA helicase Q-like 2.